The sequence spans 183 residues: Microfibrillar-associated protein 2 (183 aa).

The signal sequence occupies residues 1-17 (MRAASLFLLFLPAGLLA). Gln-18 carries the pyrrolidone carboxylic acid modification. An Isoglutamyl lysine isopeptide (Gln-Lys) (interchain with K-?) cross-link involves residue Gln-20. Tyr-47, Tyr-48, and Tyr-50 each carry sulfotyrosine. The region spanning 153 to 183 (CRDKFSKCGVLASSGLCQSVAAACARSCGGC) is the ShKT domain. Disulfide bonds link Cys-153-Cys-183, Cys-160-Cys-176, and Cys-169-Cys-180.

The protein belongs to the MFAP family. In terms of assembly, forms a ternary complex with BGN and ELN. Interacts with FBN1 (via N-terminal domain) and FBN2. Post-translationally, O-glycosylated; glycans consist of Gal(beta1-3)GalNAc. In terms of processing, forms intermolecular disulfide bonds either with other MAGP-1 molecules or with other components of the microfibrils. Forms transglutaminase cross-links with tropoelastin.

Its subcellular location is the secreted. The protein resides in the extracellular space. It localises to the extracellular matrix. Functionally, component of the elastin-associated microfibrils. The protein is Microfibrillar-associated protein 2 (MFAP2) of Bos taurus (Bovine).